Consider the following 198-residue polypeptide: Protein ORFi in retron Ec67 (198 aa).

The protein belongs to the CI repressor protein family.

This chain is Protein ORFi in retron Ec67, found in Escherichia coli.